A 358-amino-acid polypeptide reads, in one-letter code: 3-dehydroquinate synthase (358 aa).

Residues 70 to 75 (DGEQYK), 104 to 108 (GVVGD), 128 to 129 (TT), Lys141, Lys150, and 168 to 171 (CLNT) contribute to the NAD(+) site. Positions 183, 246, and 263 each coordinate Zn(2+).

This sequence belongs to the sugar phosphate cyclases superfamily. Dehydroquinate synthase family. It depends on Co(2+) as a cofactor. Requires Zn(2+) as cofactor. NAD(+) is required as a cofactor.

Its subcellular location is the cytoplasm. It carries out the reaction 7-phospho-2-dehydro-3-deoxy-D-arabino-heptonate = 3-dehydroquinate + phosphate. It participates in metabolic intermediate biosynthesis; chorismate biosynthesis; chorismate from D-erythrose 4-phosphate and phosphoenolpyruvate: step 2/7. Functionally, catalyzes the conversion of 3-deoxy-D-arabino-heptulosonate 7-phosphate (DAHP) to dehydroquinate (DHQ). The polypeptide is 3-dehydroquinate synthase (Shewanella sediminis (strain HAW-EB3)).